Consider the following 442-residue polypeptide: Histidinol dehydrogenase (442 aa).

The NAD(+) site is built by tyrosine 138, glutamine 196, and asparagine 219. Serine 245, glutamine 267, and histidine 270 together coordinate substrate. Residues glutamine 267 and histidine 270 each coordinate Zn(2+). Active-site proton acceptor residues include glutamate 334 and histidine 335. Substrate-binding residues include histidine 335, aspartate 368, glutamate 422, and histidine 427. Aspartate 368 is a binding site for Zn(2+). Position 427 (histidine 427) interacts with Zn(2+).

It belongs to the histidinol dehydrogenase family. As to quaternary structure, homodimer. Requires Zn(2+) as cofactor.

It catalyses the reaction L-histidinol + 2 NAD(+) + H2O = L-histidine + 2 NADH + 3 H(+). Its pathway is amino-acid biosynthesis; L-histidine biosynthesis; L-histidine from 5-phospho-alpha-D-ribose 1-diphosphate: step 9/9. Its function is as follows. Catalyzes the sequential NAD-dependent oxidations of L-histidinol to L-histidinaldehyde and then to L-histidine. In Pectobacterium atrosepticum (strain SCRI 1043 / ATCC BAA-672) (Erwinia carotovora subsp. atroseptica), this protein is Histidinol dehydrogenase.